Here is a 300-residue protein sequence, read N- to C-terminus: B1 kinase (300 aa).

Residues 16–282 (WVVGPLIGKG…ITMVNSLTYF (267 aa)) form the Protein kinase domain. ATP contacts are provided by residues 22–30 (IGKGGFGSI) and K45. D147 functions as the Proton acceptor in the catalytic mechanism.

It belongs to the protein kinase superfamily. Ser/Thr protein kinase family. Poxviruses subfamily. Interacts with host JIP1; this interaction increases the amount of MAPK bound to JIP1 and subsequently increases the activity of transcription factors, such as JUN, that respond to these complexes. Interacts with protein OPG198; this interaction inhibits the repressive activity of OPG198 pseudokinase on viral replication factory formation. Mg(2+) serves as cofactor. In terms of processing, autophosphorylated.

It is found in the virion. The protein resides in the host cytoplasm. The catalysed reaction is L-seryl-[protein] + ATP = O-phospho-L-seryl-[protein] + ADP + H(+). The enzyme catalyses L-threonyl-[protein] + ATP = O-phospho-L-threonyl-[protein] + ADP + H(+). Essential serine/threonine-protein kinase that plays different role in the viral life cycle. Phosphorylates the host small ribosomal protein RACK1 thereby customizing the ribosomes to a state optimal for viral mRNAs (which contain poly-A leaders) but not for host mRNAs. Facilitates viral DNA replication by inhibiting host BANF1, a cellular host defense responsive to foreign DNA. Phosphorylates host BANF1 on serine and threonine residues; this leads to BANF1 relocalization to the cytoplasm, loss of dimerization and impaired DNA binding activity. Indeed, BANF1 activity depends on its DNA-binding property which is blocked by VPK1-mediated phosphorylation. Required for viral intermediate genes expression, probably by inhibiting host BANF1. Modulates cellular responses via host JUN by two different mechanisms, either by direct phosphorylation or by modulation of upstream JIP1-MAPK complexes. Seems to participate in the accumulation/processing of late proteins and thus in virion maturation. In addition, inhibits B12 repressive activity on viral DNA replication via a phosphorylation-dependent mechanism. The polypeptide is B1 kinase (OPG187) (Bos taurus (Bovine)).